The chain runs to 243 residues: Max-interacting protein 1 (243 aa).

One can recognise a bHLH domain in the interval His-76 to Leu-128. The interval Glu-164–Cys-235 is disordered. Over residues Asp-188–Ser-198 the composition is skewed to acidic residues. The span at Ser-222 to Cys-235 shows a compositional bias: polar residues.

As to quaternary structure, efficient DNA binding requires dimerization with another bHLH protein. Binds DNA as a heterodimer with MAX.

It is found in the nucleus. Its function is as follows. Transcriptional repressor. MXI1 binds with MAX to form a sequence-specific DNA-binding protein complex which recognizes the core sequence 5'-CAC[GA]TG-3'. MXI1 thus antagonizes MYC transcriptional activity by competing for MAX. The polypeptide is Max-interacting protein 1 (mxi1) (Danio rerio (Zebrafish)).